A 99-amino-acid chain; its full sequence is Microcin E492 (99 aa).

The first 15 residues, 1–15 (MREISQKDLNLAFGA), serve as a signal peptide directing secretion. The segment at 80 to 99 (SWNGSGSGYNSATSSSGSGS) is disordered. Over residues 87–99 (GYNSATSSSGSGS) the composition is skewed to low complexity. Residue Ser99 is modified to Serine microcin E492 siderophore ester.

The protein belongs to the class IIa microcin family. Multimer. Possibly forms a homodimer or a homotrimer. Post-translationally, the C-terminal Ser is modified by attachment to a siderophore similar to enterobactin, which can bind one atom of iron. The modification consists of an ester linkage of the serine carboxyl to O6 of a glucose which is linked by a C-glycosidic bond to the 5'-benzoyl of a linear triester of N-(2,3-dihydroxybenzoyl)serine. Presence of the siderophore ester increases the antibacterial activity of the protein.

Its function is as follows. Channel-forming bacteriocin. Forms cation-selective channels. Active on enterobacteria, with highest activity against E.coli. Not active on other Gram-negative bacteria, Gram-positive bacteria or fungi. The unmodified protein is active against E.coli and S.enteritidis. When the siderophore ester is present at Ser-99, antibacterial activity against these species is increased and activity is also detected against E.cloacae and K.pneumoniae. Neutralized by its immunity protein MceB. This is Microcin E492 from Klebsiella pneumoniae.